Here is a 493-residue protein sequence, read N- to C-terminus: Cytoplasmic tRNA 2-thiolation protein 2 (493 aa).

The residue at position 489 (Ser489) is a Phosphoserine.

This sequence belongs to the CTU2/NCS2 family. In terms of assembly, interacts with NCS6 and URM1. May act by forming a heterodimer with NCS6.

The protein localises to the cytoplasm. The protein operates within tRNA modification; 5-methoxycarbonylmethyl-2-thiouridine-tRNA biosynthesis. Plays a central role in 2-thiolation of mcm(5)S(2)U at tRNA wobble positions of tRNA(Lys), tRNA(Glu) and tRNA(Gln). May act by forming a heterodimer with NCS6 that ligates sulfur from thiocarboxylated URM1 onto the uridine of tRNAs at wobble position. Prior mcm(5) tRNA modification by the elongator complex is required for 2-thiolation. May also be involved in protein urmylation. The sequence is that of Cytoplasmic tRNA 2-thiolation protein 2 from Saccharomyces cerevisiae (strain RM11-1a) (Baker's yeast).